The chain runs to 136 residues: ATP synthase epsilon chain (136 aa).

The protein belongs to the ATPase epsilon chain family. F-type ATPases have 2 components, CF(1) - the catalytic core - and CF(0) - the membrane proton channel. CF(1) has five subunits: alpha(3), beta(3), gamma(1), delta(1), epsilon(1). CF(0) has three main subunits: a, b and c.

The protein localises to the cell membrane. Functionally, produces ATP from ADP in the presence of a proton gradient across the membrane. This Ureaplasma parvum serovar 3 (strain ATCC 27815 / 27 / NCTC 11736) protein is ATP synthase epsilon chain.